Consider the following 107-residue polypeptide: Iron-sulfur cluster assembly protein CyaY (107 aa).

Belongs to the frataxin family.

Functionally, involved in iron-sulfur (Fe-S) cluster assembly. May act as a regulator of Fe-S biogenesis. The sequence is that of Iron-sulfur cluster assembly protein CyaY from Thioalkalivibrio sulfidiphilus (strain HL-EbGR7).